The sequence spans 97 residues: NADH-ubiquinone oxidoreductase chain 4L (97 aa).

3 helical membrane passes run 1–21 (MSMFGLFTCLSIYFSGVYVFC), 28–48 (LVVLLSLEYIVLSLFMLIVLF), and 57–77 (FFPVIFLVFSVCEGALGLSIL).

Belongs to the complex I subunit 4L family.

The protein resides in the mitochondrion membrane. The enzyme catalyses a ubiquinone + NADH + 5 H(+)(in) = a ubiquinol + NAD(+) + 4 H(+)(out). Functionally, core subunit of the mitochondrial membrane respiratory chain NADH dehydrogenase (Complex I) that is believed to belong to the minimal assembly required for catalysis. Complex I functions in the transfer of electrons from NADH to the respiratory chain. The immediate electron acceptor for the enzyme is believed to be ubiquinone. In Locusta migratoria (Migratory locust), this protein is NADH-ubiquinone oxidoreductase chain 4L (ND4L).